The following is a 447-amino-acid chain: Nuclear envelope integral membrane protein 2 (447 aa).

The signal sequence occupies residues 1–28 (MGPRRLPWARPGPALGLLLLALAGAVPA). 5 helical membrane-spanning segments follow: residues 144–164 (EMLD…FHFA), 173–193 (FFYL…VLLA), 202–222 (STFW…IYCF), 235–255 (IYVL…CYQH), and 275–295 (AFVF…IIAV). Residues 410 to 438 (TRTESEQDETTSYIHEGDDENEDEIHEPI) are disordered.

The protein belongs to the NEMP family.

Its subcellular location is the nucleus inner membrane. The chain is Nuclear envelope integral membrane protein 2 (NEMP2) from Gallus gallus (Chicken).